We begin with the raw amino-acid sequence, 125 residues long: Small ribosomal subunit protein uS12m (125 aa).

The protein belongs to the universal ribosomal protein uS12 family. Component of the mitochondrial ribosome small subunit.

The protein resides in the mitochondrion. In terms of biological role, protein S12 is involved in the translation initiation step. This Arabidopsis thaliana (Mouse-ear cress) protein is Small ribosomal subunit protein uS12m (RPS12).